A 776-amino-acid polypeptide reads, in one-letter code: Intermediate filament protein ifp-1 (776 aa).

The segment at 1–23 (MDSANARDCLLHLARAKLSERQD) is head. Residues 20 to 371 (ERQDLVQLND…ELLDRSGDPR (352 aa)) enclose the IF rod domain. A coil 1A region spans residues 24–55 (LVQLNDQFVDIIEHVHYMEAEHTALEHDYNLL). Residues 56-69 (KSGVQSDSSGINEI) form a linker 1 region. Positions 70-207 (YNVEIRTVRS…EDNKKIIMNE (138 aa)) are coil 1B. A linker 12 region spans residues 208–224 (HKYFVRDRNADRHVFRD). The tract at residues 225–620 (QLRKAIADIR…QRGPHHSSYH (396 aa)) is coil 2. Disordered stretches follow at residues 453 to 473 (ASPI…DSRS) and 518 to 544 (NTTQ…SERR). Residues 518-536 (NTTQINNPYASRTPTSSVN) are compositionally biased toward polar residues. The interval 621 to 768 (AATGSVSNSI…WFVYTSNTEI (148 aa)) is tail. An LTD domain is found at 653-764 (NFQRFTRWYK…EVKSWFVYTS (112 aa)).

The protein belongs to the intermediate filament family.

It is found in the cytoplasm. Functionally, cytoplasmic intermediate filaments provide mechanical strength to cells. Not essential protein. This Caenorhabditis elegans protein is Intermediate filament protein ifp-1 (ifp-1).